Reading from the N-terminus, the 53-residue chain is MKLIYIFSLVAVIAVTMIPGIMGEAEAEGRPPQIGIFDQIDKGMAAFMDLFKG.

The first 23 residues, 1 to 23, serve as a signal peptide directing secretion; sequence MKLIYIFSLVAVIAVTMIPGIMG. A propeptide spanning residues 24–29 is cleaved from the precursor; that stretch reads EAEAEG. Position 52 is a lysine amide (Lys-52).

Expressed by the venom gland.

It localises to the secreted. In terms of biological role, in vivo, this neurotoxin paralyzes about 70% of blowflies (L.caesar) one hour after intrathoracic injection, when tested at high doses (45 nmol/g). The sequence is that of U13-myrmicitoxin-Tb1a from Tetramorium bicarinatum (Tramp ant).